We begin with the raw amino-acid sequence, 356 residues long: MRRELLLEKIETYKAVMPWYVLDYYQSKLAVPYSFTTLYEYLKEYKRFFDWLMDADLTQAPKIADIDLSTLEHLTKKDLEAFVLYLRERPSLNTYSTKEGLSQTTINRTLSALSSLYKYLTEEVENDQGEPYFYRNVMKKVSTKKKKETLASRAENIKQKLFLGDETLAFLDYVDKEYEQKLSNRAKSSFRKNKERDLAIIALLLASGVRLSEAVNLDLKDVNLNMMIIEVIRKGGKRDSVNVAGFAKGYLESYLAVRQRRYKAEKQDLAFFLTEYRGVPNRMDASSIEKMVGKYSEDFKIRVTPHKLRHTLATRLYDATKSQVLVSHQLGHSSTQVTDLYTHIVNDEQKNALDNL.

The 106-residue stretch at 16–121 folds into the Core-binding (CB) domain; the sequence is VMPWYVLDYY…ALSSLYKYLT (106 aa). One can recognise a Tyr recombinase domain in the interval 169-354; that stretch reads AFLDYVDKEY…VNDEQKNALD (186 aa). Residues Arg-210, Lys-234, His-306, Arg-309, and His-332 contribute to the active site. Tyr-341 serves as the catalytic O-(3'-phospho-DNA)-tyrosine intermediate.

Belongs to the 'phage' integrase family. XerS subfamily.

The protein localises to the cytoplasm. With respect to regulation, ftsK is required for recombination. Site-specific tyrosine recombinase, which acts by catalyzing the cutting and rejoining of the recombining DNA molecules. Essential to convert dimers of the bacterial chromosome into monomers to permit their segregation at cell division. This chain is Tyrosine recombinase XerS, found in Streptococcus pyogenes serotype M28 (strain MGAS6180).